The chain runs to 263 residues: Superoxide dismutase [Fe] 3, chloroplastic (263 aa).

Residues 1–41 (MSSCVVTTSCFYTISDSSIRLKSPKLLNLSNQQRRRSLRSR) constitute a chloroplast transit peptide. Positions 74, 127, 211, and 215 each coordinate Fe cation.

Belongs to the iron/manganese superoxide dismutase family. In terms of assembly, homodimer. Heterodimer with FSD2. Interacts with MRL7. Fe cation serves as cofactor.

It is found in the plastid. The protein resides in the chloroplast thylakoid. The enzyme catalyses 2 superoxide + 2 H(+) = H2O2 + O2. With respect to regulation, activated by cpn20/cpn21 (in vitro). Its function is as follows. Destroys superoxide anion radicals which are normally produced within the cells and which are toxic to biological systems. Plays important role in chloroplast development, particularly in the maintenance of thylakoids membranes. Seems to act as a heterodimer with FSD2. In Arabidopsis thaliana (Mouse-ear cress), this protein is Superoxide dismutase [Fe] 3, chloroplastic.